Consider the following 361-residue polypeptide: POU domain, class 3, transcription factor 4 (361 aa).

Disordered stretches follow at residues Pro-99–Leu-131 and Met-144–Asp-192. A compositionally biased stretch (polar residues) spans Ala-119–Leu-131. Positions Val-165–His-183 are enriched in basic and acidic residues. The POU-specific domain maps to Glu-186 to Asp-260. Ser-265 bears the Phosphoserine mark. The homeobox DNA-binding region spans Lys-278–Thr-337. Residues Lys-334 to Leu-361 are disordered. Residues Gln-343 to Leu-361 show a composition bias toward basic and acidic residues.

The protein belongs to the POU transcription factor family. Class-3 subfamily. As to quaternary structure, interacts with HNRNPU. Brain specific.

It localises to the nucleus. In terms of biological role, probable transcription factor which exert its primary action widely during early neural development and in a very limited set of neurons in the mature brain. In Mus musculus (Mouse), this protein is POU domain, class 3, transcription factor 4 (Pou3f4).